The primary structure comprises 261 residues: MAGDSEQALPKHSPQNGQPFLIGVSGGTASGKSSVCSKIVQLLGQNEVDHHQKQVVMLSQDSFYRILTPEQKSKALKGQFNFDHPDAFDNELILKTLKELMEGKTVQIPVYDFVTHSRKEETLVVYPADVVLFEGILAFYMQEIRDMFQMKLFVDTDADTRLSRRVLRDINERGRDLEQVLTQYITFVKPAFEEFCLPTKKYADVIIPRGADNVVAINLIVQHIQDILNGGLTKRQTNGYTNGFTSPRTRHPSDSNSSRPH.

A disordered region spans residues 1-24 (MAGDSEQALPKHSPQNGQPFLIGV). Residue 26-34 (GGTASGKSS) participates in ATP binding. Substrate-binding residues include Asp-83, Tyr-111, His-116, Arg-165, Arg-175, and Gln-183. ATP is bound at residue Asp-212. Residues 238–247 (NGYTNGFTSP) show a composition bias toward polar residues. Residues 238–261 (NGYTNGFTSPRTRHPSDSNSSRPH) form a disordered region.

The protein belongs to the uridine kinase family. Homotetramer.

It catalyses the reaction uridine + ATP = UMP + ADP + H(+). The enzyme catalyses cytidine + ATP = CMP + ADP + H(+). The protein operates within pyrimidine metabolism; CTP biosynthesis via salvage pathway; CTP from cytidine: step 1/3. It functions in the pathway pyrimidine metabolism; UMP biosynthesis via salvage pathway; UMP from uridine: step 1/1. Its function is as follows. Phosphorylates uridine and cytidine to uridine monophosphate and cytidine monophosphate. Does not phosphorylate deoxyribonucleosides or purine ribonucleosides. Can use ATP or GTP as a phosphate donor. This is Uridine-cytidine kinase 2 (uck2) from Xenopus tropicalis (Western clawed frog).